Here is a 317-residue protein sequence, read N- to C-terminus: Transaldolase (317 aa).

The active-site Schiff-base intermediate with substrate is the Lys-126.

It belongs to the transaldolase family. Type 1 subfamily. As to quaternary structure, homodimer.

It localises to the cytoplasm. It carries out the reaction D-sedoheptulose 7-phosphate + D-glyceraldehyde 3-phosphate = D-erythrose 4-phosphate + beta-D-fructose 6-phosphate. It functions in the pathway carbohydrate degradation; pentose phosphate pathway; D-glyceraldehyde 3-phosphate and beta-D-fructose 6-phosphate from D-ribose 5-phosphate and D-xylulose 5-phosphate (non-oxidative stage): step 2/3. Transaldolase is important for the balance of metabolites in the pentose-phosphate pathway. The protein is Transaldolase of Paraburkholderia phytofirmans (strain DSM 17436 / LMG 22146 / PsJN) (Burkholderia phytofirmans).